The primary structure comprises 103 residues: Large ribosomal subunit protein P2 (103 aa).

The disordered stretch occupies residues 64–103; the sequence is LAISSSQKSEPAQPADTAESTQATENKEEEDEDFDIFAAF. Acidic residues predominate over residues 90-103; sequence KEEEDEDFDIFAAF.

It belongs to the eukaryotic ribosomal protein P1/P2 family. In terms of assembly, component of the large ribosomal subunit.

It localises to the cytoplasm. In terms of biological role, plays an important role in the elongation step of protein synthesis. This Encephalitozoon cuniculi (strain GB-M1) (Microsporidian parasite) protein is Large ribosomal subunit protein P2 (RPP2A).